The following is a 458-amino-acid chain: Light-independent protochlorophyllide reductase subunit N (458 aa).

Residues C22, C47, and C107 each contribute to the [4Fe-4S] cluster site.

It belongs to the BchN/ChlN family. Protochlorophyllide reductase is composed of three subunits; ChlL, ChlN and ChlB. Forms a heterotetramer of two ChlB and two ChlN subunits. [4Fe-4S] cluster serves as cofactor.

The protein resides in the plastid. The protein localises to the chloroplast. It carries out the reaction chlorophyllide a + oxidized 2[4Fe-4S]-[ferredoxin] + 2 ADP + 2 phosphate = protochlorophyllide a + reduced 2[4Fe-4S]-[ferredoxin] + 2 ATP + 2 H2O. It functions in the pathway porphyrin-containing compound metabolism; chlorophyll biosynthesis (light-independent). Its function is as follows. Component of the dark-operative protochlorophyllide reductase (DPOR) that uses Mg-ATP and reduced ferredoxin to reduce ring D of protochlorophyllide (Pchlide) to form chlorophyllide a (Chlide). This reaction is light-independent. The NB-protein (ChlN-ChlB) is the catalytic component of the complex. This chain is Light-independent protochlorophyllide reductase subunit N, found in Chaetosphaeridium globosum (Charophycean green alga).